Here is a 474-residue protein sequence, read N- to C-terminus: MKTMKRVKTVTARSSDFGKWYTDVCLKAELIAYSEAKGFIIYLPYGYALWENIQKHLNCTLQKTGHQNVYFPLVFPEKLFHKEKNHIQGFSPEAAMITTTGKKNLSEKLVIRPTSEILFSQYYSKTITSYRDLPKLYNQWCNVVRWEKTTKPFLRGKEFLWQEGHTVHATEQEAMQQTLSILDIYQKLGKNLLALPFVCGKKTETEKFAGALITYSIEALMHDGQALQAGTSHYLGTNFAKSFQIQFQDCDHQKKYVHQTSWGVSTRLIGALIMVHSDDEGLVLPPYVSPMQIVIIPLQPQDDAVKQTSENLFSILQKNYRVHLDLQDKTAGWKFSQYELKGVPLRIEIGKRGLENDEVTIFQRYNFAKQNIKTKDLPSQIPQLFETIHNNMYQKALQHLEQNRKQATTYEEFKTYLKQGGYVAMSISGTDAELQIKQETGATARVILETNLITANCPVTNKKALQTVLFARAY.

It belongs to the class-II aminoacyl-tRNA synthetase family. ProS type 3 subfamily. As to quaternary structure, homodimer.

Its subcellular location is the cytoplasm. It catalyses the reaction tRNA(Pro) + L-proline + ATP = L-prolyl-tRNA(Pro) + AMP + diphosphate. Its function is as follows. Catalyzes the attachment of proline to tRNA(Pro) in a two-step reaction: proline is first activated by ATP to form Pro-AMP and then transferred to the acceptor end of tRNA(Pro). The sequence is that of Proline--tRNA ligase from Onion yellows phytoplasma (strain OY-M).